The chain runs to 510 residues: MHTDLWERGCERLAAELPEQQFNTWIRPLPPADVTLAGDGVLVGLRVPNRFKLDWIRAQYGSRIEATLSELAGKPVRLELSLLPRDAVARAQGMAAAPAAQAGAAPQPTQSPMAIGAALHAAATARHDPQSVVPTPGGSANGRAAPRVGEPGGPVGTSTLPVAPTLSPAVSRGRLNPALTFDTLVPGRANQMARTAALHVVGAPGHMYNPLFIYGGVGLGKTHLIHAVGNALIRDNPDARVLYLHAEQFISDVVRNYQRKTFDELKAKYHSLDLLLIDDVQFFAGKDRTQEEFFNAFEALLAKRAHIIMTSDTYPKGLVDIDERLTSRFDAGLTVAIEPPELEMRVAILMKKSDAEGSRMPEDVAFFVAKNVRANVRELEGALRKVLAYSRFSHKEISINLAREALKDLLSIQNRQVSVENIQKTVADFYKIKIADMYSKKRPASIARPRQIAMYLAKEMTQKSLPEIGELFGGRDHTTVLHAVRKIGGERQKNTELNQQLHVLEQTLKG.

The tract at residues 1-74 (MHTDLWERGC…EATLSELAGK (74 aa)) is domain I, interacts with DnaA modulators. A domain II region spans residues 74–173 (KPVRLELSLL…PTLSPAVSRG (100 aa)). The disordered stretch occupies residues 125-168 (ARHDPQSVVPTPGGSANGRAAPRVGEPGGPVGTSTLPVAPTLSP). The interval 174–390 (RLNPALTFDT…GALRKVLAYS (217 aa)) is domain III, AAA+ region. The ATP site is built by Gly218, Gly220, Lys221, and Thr222. Positions 391-510 (RFSHKEISIN…LHVLEQTLKG (120 aa)) are domain IV, binds dsDNA.

This sequence belongs to the DnaA family. Oligomerizes as a right-handed, spiral filament on DNA at oriC.

The protein resides in the cytoplasm. In terms of biological role, plays an essential role in the initiation and regulation of chromosomal replication. ATP-DnaA binds to the origin of replication (oriC) to initiate formation of the DNA replication initiation complex once per cell cycle. Binds the DnaA box (a 9 base pair repeat at the origin) and separates the double-stranded (ds)DNA. Forms a right-handed helical filament on oriC DNA; dsDNA binds to the exterior of the filament while single-stranded (ss)DNA is stabiized in the filament's interior. The ATP-DnaA-oriC complex binds and stabilizes one strand of the AT-rich DNA unwinding element (DUE), permitting loading of DNA polymerase. After initiation quickly degrades to an ADP-DnaA complex that is not apt for DNA replication. Binds acidic phospholipids. This chain is Chromosomal replication initiator protein DnaA, found in Leptothrix cholodnii (strain ATCC 51168 / LMG 8142 / SP-6) (Leptothrix discophora (strain SP-6)).